The sequence spans 393 residues: Iripin-5 (393 aa).

A signal peptide spans 1-16 (MKTLIVLMCSLVVVWA). N-linked (GlcNAc...) asparagine glycans are attached at residues N198 and N245.

Belongs to the serpin family. As to expression, highly expressed in female salivary gland during blood feeding. Expressed in female midgut and ovary during blood feeding.

It localises to the secreted. Its function is as follows. Serine protease inhibitor that modulates blood feeding of ticks on vertebrate species. Inhibits host neutrophil elastase (ELANE) and proteinase 3/myeloblastin (PRTN3). Moderately inhibits host chymase, cathepsin G (CTSG), trypsin and alpha-chymotrypsin. Decreases host neutrophil migration. Decreases nitric oxide production by host macrophages. Decreases host complement activity. The chain is Iripin-5 from Ixodes ricinus (Common tick).